The chain runs to 608 residues: DNA mismatch repair protein MutL (608 aa).

This sequence belongs to the DNA mismatch repair MutL/HexB family.

Its function is as follows. This protein is involved in the repair of mismatches in DNA. It is required for dam-dependent methyl-directed DNA mismatch repair. May act as a 'molecular matchmaker', a protein that promotes the formation of a stable complex between two or more DNA-binding proteins in an ATP-dependent manner without itself being part of a final effector complex. This Elusimicrobium minutum (strain Pei191) protein is DNA mismatch repair protein MutL.